Reading from the N-terminus, the 514-residue chain is Cardiolipin synthase 2 (514 aa).

3 consecutive transmembrane segments (helical) span residues Leu-7–Val-27, Ile-41–Phe-61, and Leu-71–Phe-91. 2 PLD phosphodiesterase domains span residues Ile-249–Tyr-276 and Glu-427–Ser-454. Catalysis depends on residues His-254, Lys-256, Asp-261, His-432, Lys-434, and Asp-439.

This sequence belongs to the phospholipase D family. Cardiolipin synthase subfamily.

The protein resides in the cell membrane. The enzyme catalyses 2 a 1,2-diacyl-sn-glycero-3-phospho-(1'-sn-glycerol) = a cardiolipin + glycerol. Its function is as follows. Catalyzes the reversible phosphatidyl group transfer from one phosphatidylglycerol molecule to another to form cardiolipin (CL) (diphosphatidylglycerol) and glycerol. In Bacillus anthracis, this protein is Cardiolipin synthase 2 (cls2).